Consider the following 264-residue polypeptide: Indole-3-glycerol phosphate synthase (264 aa).

It belongs to the TrpC family.

It catalyses the reaction 1-(2-carboxyphenylamino)-1-deoxy-D-ribulose 5-phosphate + H(+) = (1S,2R)-1-C-(indol-3-yl)glycerol 3-phosphate + CO2 + H2O. The protein operates within amino-acid biosynthesis; L-tryptophan biosynthesis; L-tryptophan from chorismate: step 4/5. The chain is Indole-3-glycerol phosphate synthase from Stenotrophomonas maltophilia (strain R551-3).